A 493-amino-acid chain; its full sequence is MFQVQTELANHGAVIVALFEEETSRFVQELDKAFEGQLQGLLDEKELSTKKKSISKVHSLGKTNVKRYYFVGLGKKEAYTTETLRASLSKTFKTLQAEKIQDAAILLDSFVTEKLDAIDVAHIAAEVYCLGTYRLQTYKTDKKEHVELEKLVVITAEDAKEIEAALTVGYVHGRATNSARTLVNMPPNMLTATKLAEYAVELAEKYDMDYKVLEKEEMEELGMGALLAVNQGSTEPPKMIALIYKGKEEWKDVIGLIGKGITYDTGGYSLKPRDGMVGMKGDMGGAAAVLGAMEIIGELRPEQNVIAIIPSTDNVVSGTAFKPDDVITSMSGKTIEVLNTDAEGRLALADGITYAKKLGANYLVDVATLTGGVIVALGNHTTGAMTNNETLFEQVLEASMETDERIWQLPIFERDKERVRNSKFADLNNSPGRDGHAVMAGTFLGEFAEDTPWVHLDIAGTSDTTSTHDLGPAGATGVMVRTLATLVERFGEE.

The Mn(2+) site is built by Lys-259 and Asp-264. Lys-271 is a catalytic residue. Residues Asp-282, Asp-341, and Glu-343 each contribute to the Mn(2+) site. Arg-345 is an active-site residue.

It belongs to the peptidase M17 family. It depends on Mn(2+) as a cofactor.

Its subcellular location is the cytoplasm. The catalysed reaction is Release of an N-terminal amino acid, Xaa-|-Yaa-, in which Xaa is preferably Leu, but may be other amino acids including Pro although not Arg or Lys, and Yaa may be Pro. Amino acid amides and methyl esters are also readily hydrolyzed, but rates on arylamides are exceedingly low.. The enzyme catalyses Release of an N-terminal amino acid, preferentially leucine, but not glutamic or aspartic acids.. Functionally, presumably involved in the processing and regular turnover of intracellular proteins. Catalyzes the removal of unsubstituted N-terminal amino acids from various peptides. The chain is Probable cytosol aminopeptidase from Bacillus cytotoxicus (strain DSM 22905 / CIP 110041 / 391-98 / NVH 391-98).